We begin with the raw amino-acid sequence, 1216 residues long: ATP-dependent DNA helicase Q4 (1216 aa).

Disordered stretches follow at residues 72 to 100 (EAQE…QSLL) and 113 to 171 (NLKN…PRLG). Polar residues-rich tracts occupy residues 86–100 (AATQ…QSLL) and 114–137 (LKNT…SLST). Residues S179 and S181 each carry the phosphoserine modification. Positions 235 to 340 (SEVSVQSPEA…LHASPRPASL (106 aa)) are disordered. Polar residues-rich tracts occupy residues 248 to 262 (QPAQ…SINS) and 306 to 320 (TQVN…SNQA). The segment at 393–410 (DTCFRCGQFGHWASQCSQ) adopts a CCHC-type zinc-finger fold. Residues 436 to 458 (AQRTGTASCHHSGEETQPAAPEL) form a disordered region. Positions 506-684 (IMRILSGIST…AQHLGIAGEF (179 aa)) constitute a Helicase ATP-binding domain. 519 to 526 (LPTGAGKS) lines the ATP pocket. A DEAH box motif is present at residues 627 to 630 (DEVH). One can recognise a Helicase C-terminal domain in the interval 705 to 872 (DSDQALVTLL…AVKRLVQRVF (168 aa)). Positions 875, 877, 906, and 909 each coordinate Zn(2+).

Belongs to the helicase family. RecQ subfamily. In terms of assembly, interacts with UBR1 and UBR2. Interacts with MCM10; this interaction regulates RECQL4 unwinding activity. Interacts with TOPBP1. Requires Zn(2+) as cofactor.

It is found in the cytoplasm. The protein localises to the nucleus. The catalysed reaction is Couples ATP hydrolysis with the unwinding of duplex DNA by translocating in the 3'-5' direction.. The enzyme catalyses ATP + H2O = ADP + phosphate + H(+). In terms of biological role, an ATP-dependent DNA helicase which unwinds dsDNA with a 3'-overhang in a 3'-5' direction. May play a role in development of the palate and the limbs. May modulate chromosome segregation. In Mus musculus (Mouse), this protein is ATP-dependent DNA helicase Q4 (Recql4).